The chain runs to 104 residues: Zinc-containing ferredoxin-2 (104 aa).

Residues 2–37 form an N-terminal extension region; it reads GIDPNYRQNRQVVGEHEGHKIYGPVEPPGKLGIHGT. Zn(2+)-binding residues include His-17, His-20, and His-35. 4Fe-4S ferredoxin-type domains are found at residues 38–66 and 75–104; these read IVGV…WFDT and KADP…VKPP. [3Fe-4S] cluster is bound by residues Cys-46 and Cys-52. Cys-56 lines the [4Fe-4S] cluster pocket. Zn(2+) is bound at residue Asp-77. [4Fe-4S] cluster is bound by residues Cys-84, Cys-87, and Cys-90. A [3Fe-4S] cluster-binding site is contributed by Cys-94.

[3Fe-4S] cluster is required as a cofactor. Requires [4Fe-4S] cluster as cofactor. Zn(2+) serves as cofactor.

Ferredoxins are iron-sulfur proteins that transfer electrons in a wide variety of metabolic reactions. The polypeptide is Zinc-containing ferredoxin-2 (zfx2) (Sulfurisphaera tokodaii (strain DSM 16993 / JCM 10545 / NBRC 100140 / 7) (Sulfolobus tokodaii)).